Here is a 536-residue protein sequence, read N- to C-terminus: Trigger factor (536 aa).

One can recognise a PPIase FKBP-type domain in the interval 164–249; sequence GDQVIIDFAG…VKEVKVPAAT (86 aa). Residues 439–536 are disordered; that stretch reads IEADDDSGHV…APAKKAAAKK (98 aa). Residues 472–502 are compositionally biased toward basic and acidic residues; that stretch reads TKKEAVKDEAKAEEAPAKKAPAKKAEPKAEA. A compositionally biased stretch (low complexity) spans 503–515; the sequence is KPAAAKKAAPAKA. Residues 516-525 are compositionally biased toward basic and acidic residues; that stretch reads AAEEKAEPAK. Residues 527 to 536 show a composition bias toward basic residues; that stretch reads APAKKAAAKK.

The protein belongs to the FKBP-type PPIase family. Tig subfamily.

The protein resides in the cytoplasm. The enzyme catalyses [protein]-peptidylproline (omega=180) = [protein]-peptidylproline (omega=0). In terms of biological role, involved in protein export. Acts as a chaperone by maintaining the newly synthesized protein in an open conformation. Functions as a peptidyl-prolyl cis-trans isomerase. This chain is Trigger factor, found in Sphingopyxis alaskensis (strain DSM 13593 / LMG 18877 / RB2256) (Sphingomonas alaskensis).